Reading from the N-terminus, the 126-residue chain is Glycine cleavage system H protein (126 aa).

The Lipoyl-binding domain occupies 23-104 (TLTVGITDHA…PYESWLFKIK (82 aa)). Lys64 is subject to N6-lipoyllysine.

The protein belongs to the GcvH family. The glycine cleavage system is composed of four proteins: P, T, L and H. Requires (R)-lipoate as cofactor.

The glycine cleavage system catalyzes the degradation of glycine. The H protein shuttles the methylamine group of glycine from the P protein to the T protein. This Paraburkholderia xenovorans (strain LB400) protein is Glycine cleavage system H protein.